The sequence spans 109 residues: Large ribosomal subunit protein uL22 (109 aa).

This sequence belongs to the universal ribosomal protein uL22 family. As to quaternary structure, part of the 50S ribosomal subunit.

In terms of biological role, this protein binds specifically to 23S rRNA; its binding is stimulated by other ribosomal proteins, e.g. L4, L17, and L20. It is important during the early stages of 50S assembly. It makes multiple contacts with different domains of the 23S rRNA in the assembled 50S subunit and ribosome. The globular domain of the protein is located near the polypeptide exit tunnel on the outside of the subunit, while an extended beta-hairpin is found that lines the wall of the exit tunnel in the center of the 70S ribosome. The sequence is that of Large ribosomal subunit protein uL22 from Ralstonia pickettii (strain 12J).